Consider the following 309-residue polypeptide: Formate-nitrite transporter (309 aa).

Residues 1–19 (MPPNNSKYVLDPVSIKSVC) lie on the Cytoplasmic side of the membrane. The segment at residues 20 to 35 (GGEESYIRCVEYGKKK) is an intramembrane region (helical). Over 36–40 (AHYSN) the chain is Cytoplasmic. The chain crosses the membrane as a helical span at residues 41 to 68 (LNLLAKAILAGMFVGLCAHASGIAGGLF). Residues 69 to 79 (YYHKLREIVGA) lie on the Extracellular side of the membrane. The chain crosses the membrane as a helical span at residues 80–100 (SMSVFVYGFTFPIAFMCIICT). Topologically, residues 101-122 (GSDLFTGNTLAVTMALYEKKVK) are cytoplasmic. The helical transmembrane segment at 123 to 150 (LLDYLRVMTISLFGNYVGAVSFAFFVSY) threads the bilayer. At 151–163 (LSGAFTNVHAVEK) the chain is on the extracellular side. The helical intramembrane region spans 164–179 (NHFFQFLNDIAEKKVH). Residues 180–181 (HT) lie on the Extracellular side of the membrane. Residues 182 to 206 (FVECVSLAVGCNIFVCLAVYFVLTL) traverse the membrane as a helical segment. At 207–209 (KDG) the chain is on the cytoplasmic side. Residues 210–226 (AGYVFSVFFAVYAFAIA) form a helical membrane-spanning segment. Topologically, residues 227–249 (GYEHIIANIYTLNIALMVNTKIT) are extracellular. Residues 250–280 (VYQAYIKNLLPTLLGNYIAGAIVLGLPLYFI) form a helical membrane-spanning segment. At 281-309 (YKEHYYNFERSKRDNNDAQMKSLSIELRN) the chain is on the cytoplasmic side.

This sequence belongs to the FNT transporter (TC 1.A.16) family. Homopentamer.

The protein localises to the cell membrane. It localises to the vacuole membrane. It catalyses the reaction (S)-lactate(in) + H(+)(in) = (S)-lactate(out) + H(+)(out). The catalysed reaction is formate(in) + H(+)(in) = formate(out) + H(+)(out). The enzyme catalyses pyruvate(out) + H(+)(out) = pyruvate(in) + H(+)(in). It carries out the reaction acetate(out) + H(+)(out) = acetate(in) + H(+)(in). With respect to regulation, inhibited by diethylpyrocarbonate (DEPC). Protonophores, such as 2,4-dinitrophenol and carbonylcyanide-3-chlorophenylhydrazone, abolish transport. Inhibited by phloretin, furosemide, alpha-cyano-4-hydroxy-cinnamate and alpha-fluorocinnamate. Inhibited by the Malaria Box compound MMV007839 and its derivatives BH296 and BH267.meta. Inhibited by the Malaria Box compound MMV000972. Inhibited by broad-specificity anion transport inhibitor NPPB. Functionally, monocarboxylate-proton symporter that mediates the efflux of the waste product lactate in the intraerythrocytic parasites; active in acidic-to-neutral pH range. Transports L-lactate. Transports D-lactate, pyruvate, acetate and formate. Essential for asexual growth but dispensable for the development of gametocytes. The chain is Formate-nitrite transporter from Plasmodium falciparum (isolate 3D7).